Here is a 21-residue protein sequence, read N- to C-terminus: Hemocyanin subunit 6 (21 aa).

Belongs to the tyrosinase family. Hemocyanin subfamily. Hemolymph.

The protein resides in the secreted. It localises to the extracellular space. Hemocyanins are copper-containing oxygen carriers occurring freely dissolved in the hemolymph of many mollusks and arthropods. In Maja squinado (Mediterranean spider crab), this protein is Hemocyanin subunit 6.